We begin with the raw amino-acid sequence, 462 residues long: 3-ketoacyl CoA thiolase 1, peroxisomal (462 aa).

The transit peptide at 1–34 directs the protein to the peroxisome; sequence MEKAIQRQRVLLEHLQPIRHHTHDHSSSLTTSIC. Residue cysteine 138 is the Acyl-thioester intermediate of the active site. Active-site proton acceptor residues include histidine 393 and cysteine 425. Substrate is bound at residue glycine 427.

It belongs to the thiolase-like superfamily. Thiolase family. As to quaternary structure, homodimer.

It is found in the peroxisome. It catalyses the reaction an acyl-CoA + acetyl-CoA = a 3-oxoacyl-CoA + CoA. It participates in aromatic compound metabolism. The protein operates within lipid metabolism; fatty acid metabolism. Functionally, component of the floral volatile benzenoid/phenylpropanoid (FVBP) biosynthetic pathway. Thiolase that catalyzes the conversion of 3-oxo-3-phenylpropionyl-CoA (benzoylacetyl-CoA) to benzoyl-CoA. The protein is 3-ketoacyl CoA thiolase 1, peroxisomal of Petunia hybrida (Petunia).